A 354-amino-acid polypeptide reads, in one-letter code: Methionine aminotransferase BCAT4 (354 aa).

Lysine 198 bears the N6-(pyridoxal phosphate)lysine mark.

Belongs to the class-IV pyridoxal-phosphate-dependent aminotransferase family. Pyridoxal 5'-phosphate serves as cofactor. In terms of tissue distribution, mostly expressed in phloem.

It localises to the cytoplasm. The catalysed reaction is a 2-oxocarboxylate + L-methionine = 4-methylsulfanyl-2-oxobutanoate + an L-alpha-amino acid. Converts 2-oxo acids to branched-chain amino acids. Shows activity with L-Leu, L-Ile and L-Val as amino donors and alpha-keto-glutarate as an amino acceptor, but no activity for D-isomers of Leu, Ile, Val, Asp, Glu or Ala. Acts on methionine and its derivatives and the corresponding 2-oxo acids. Catalyzes the initial deamination of methionine to 4-methylthio-2-oxobutyrate as well as the transamination of other typical intermediates of the methionine chain elongation pathway. The polypeptide is Methionine aminotransferase BCAT4 (BCAT4) (Arabidopsis thaliana (Mouse-ear cress)).